The sequence spans 351 residues: Molybdenum import ATP-binding protein ModC (351 aa).

The ABC transporter domain maps to 1–229 (MLQINVKKQL…PIFAPWKGES (229 aa)). 31–38 (GLSGSGKT) is an ATP binding site. The 63-residue stretch at 289–351 (QTSIRNILRG…YVQIKAVSVM (63 aa)) folds into the Mop domain.

The protein belongs to the ABC transporter superfamily. Molybdate importer (TC 3.A.1.8) family. The complex is composed of two ATP-binding proteins (ModC), two transmembrane proteins (ModB) and a solute-binding protein (ModA).

The protein resides in the cell inner membrane. It catalyses the reaction molybdate(out) + ATP + H2O = molybdate(in) + ADP + phosphate + H(+). Part of the ABC transporter complex ModABC involved in molybdenum import. Responsible for energy coupling to the transport system. This chain is Molybdenum import ATP-binding protein ModC, found in Haemophilus influenzae (strain ATCC 51907 / DSM 11121 / KW20 / Rd).